Consider the following 313-residue polypeptide: Aspartate carbamoyltransferase catalytic subunit (313 aa).

Carbamoyl phosphate contacts are provided by Arg58 and Thr59. Position 86 (Lys86) interacts with L-aspartate. 3 residues coordinate carbamoyl phosphate: Arg108, His136, and Gln139. Positions 169 and 223 each coordinate L-aspartate. Gly265 and Pro266 together coordinate carbamoyl phosphate.

Belongs to the aspartate/ornithine carbamoyltransferase superfamily. ATCase family. As to quaternary structure, heterododecamer (2C3:3R2) of six catalytic PyrB chains organized as two trimers (C3), and six regulatory PyrI chains organized as three dimers (R2).

The catalysed reaction is carbamoyl phosphate + L-aspartate = N-carbamoyl-L-aspartate + phosphate + H(+). Its pathway is pyrimidine metabolism; UMP biosynthesis via de novo pathway; (S)-dihydroorotate from bicarbonate: step 2/3. Functionally, catalyzes the condensation of carbamoyl phosphate and aspartate to form carbamoyl aspartate and inorganic phosphate, the committed step in the de novo pyrimidine nucleotide biosynthesis pathway. In Anaeromyxobacter dehalogenans (strain 2CP-1 / ATCC BAA-258), this protein is Aspartate carbamoyltransferase catalytic subunit.